A 446-amino-acid chain; its full sequence is Ribosomal protein uS12 methylthiotransferase RimO (446 aa).

The 116-residue stretch at 4–119 (YKVGMVSLGC…IDKVIKEFIE (116 aa)) folds into the MTTase N-terminal domain. The [4Fe-4S] cluster site is built by Cys13, Cys48, Cys82, Cys157, Cys161, and Cys164. One can recognise a Radical SAM core domain in the interval 143–373 (TTQKESAYIR…MLSQEKISND (231 aa)). A TRAM domain is found at 376–442 (KLKVNKKYDI…DYDLIGVVED (67 aa)).

This sequence belongs to the methylthiotransferase family. RimO subfamily. [4Fe-4S] cluster serves as cofactor.

It is found in the cytoplasm. It catalyses the reaction L-aspartate(89)-[ribosomal protein uS12]-hydrogen + (sulfur carrier)-SH + AH2 + 2 S-adenosyl-L-methionine = 3-methylsulfanyl-L-aspartate(89)-[ribosomal protein uS12]-hydrogen + (sulfur carrier)-H + 5'-deoxyadenosine + L-methionine + A + S-adenosyl-L-homocysteine + 2 H(+). In terms of biological role, catalyzes the methylthiolation of an aspartic acid residue of ribosomal protein uS12. This chain is Ribosomal protein uS12 methylthiotransferase RimO, found in Clostridium botulinum (strain Eklund 17B / Type B).